The sequence spans 181 residues: Alkyl hydroperoxide reductase AhpD (181 aa).

The active-site Proton donor is C131. The cysteines at positions 131 and 134 are disulfide-linked. The active-site Cysteine sulfenic acid (-SOH) intermediate is C134.

Belongs to the AhpD family.

It catalyses the reaction N(6)-[(R)-dihydrolipoyl]-L-lysyl-[lipoyl-carrier protein] + a hydroperoxide = N(6)-[(R)-lipoyl]-L-lysyl-[lipoyl-carrier protein] + an alcohol + H2O. Functionally, antioxidant protein with alkyl hydroperoxidase activity. Required for the reduction of the AhpC active site cysteine residues and for the regeneration of the AhpC enzyme activity. The polypeptide is Alkyl hydroperoxide reductase AhpD (Bradyrhizobium sp. (strain BTAi1 / ATCC BAA-1182)).